We begin with the raw amino-acid sequence, 174 residues long: Co-chaperone protein HscB homolog (174 aa).

Residues 2–74 (NYFELFNLPV…IRRAEHMLAL (73 aa)) form the J domain.

The protein belongs to the HscB family. In terms of assembly, interacts with HscA and stimulates its ATPase activity.

In terms of biological role, co-chaperone involved in the maturation of iron-sulfur cluster-containing proteins. Seems to help targeting proteins to be folded toward HscA. This is Co-chaperone protein HscB homolog from Shewanella amazonensis (strain ATCC BAA-1098 / SB2B).